Reading from the N-terminus, the 566-residue chain is KsdD-like steroid dehydrogenase Rv0785 (566 aa).

Asp23 to Asn54 is a binding site for FAD.

Belongs to the FAD-dependent oxidoreductase 2 family. FAD is required as a cofactor.

Its pathway is lipid metabolism; steroid biosynthesis. Its function is as follows. Able to catalyze the elimination of the C-1 and C-2 hydrogen atoms of the A-ring from the polycyclic ring structure of 3-ketosteroids. In Mycobacterium tuberculosis (strain ATCC 25618 / H37Rv), this protein is KsdD-like steroid dehydrogenase Rv0785.